We begin with the raw amino-acid sequence, 193 residues long: Peptidyl-tRNA hydrolase (193 aa).

Tyr-16 is a binding site for tRNA. His-21 (proton acceptor) is an active-site residue. TRNA contacts are provided by Phe-66, Asn-68, and Asn-114.

This sequence belongs to the PTH family. As to quaternary structure, monomer.

The protein localises to the cytoplasm. The catalysed reaction is an N-acyl-L-alpha-aminoacyl-tRNA + H2O = an N-acyl-L-amino acid + a tRNA + H(+). Functionally, hydrolyzes ribosome-free peptidyl-tRNAs (with 1 or more amino acids incorporated), which drop off the ribosome during protein synthesis, or as a result of ribosome stalling. In terms of biological role, catalyzes the release of premature peptidyl moieties from peptidyl-tRNA molecules trapped in stalled 50S ribosomal subunits, and thus maintains levels of free tRNAs and 50S ribosomes. In Trichlorobacter lovleyi (strain ATCC BAA-1151 / DSM 17278 / SZ) (Geobacter lovleyi), this protein is Peptidyl-tRNA hydrolase.